The chain runs to 165 residues: Nucleoside-triphosphatase THEP1 (165 aa).

ATP contacts are provided by residues 7-14 and 93-100; these read GRPGVGKT and LVIIDEVG.

The protein belongs to the THEP1 NTPase family.

It catalyses the reaction a ribonucleoside 5'-triphosphate + H2O = a ribonucleoside 5'-diphosphate + phosphate + H(+). Has nucleotide phosphatase activity towards ATP, GTP, CTP, TTP and UTP. May hydrolyze nucleoside diphosphates with lower efficiency. The polypeptide is Nucleoside-triphosphatase THEP1 (Archaeoglobus fulgidus (strain ATCC 49558 / DSM 4304 / JCM 9628 / NBRC 100126 / VC-16)).